The following is a 1265-amino-acid chain: Protein transport protein SEC31 (1265 aa).

WD repeat units lie at residues 6–46 (EIAR…ELWD), 61–105 (TVDN…KTKD), 116–156 (KHTG…EPFA), 162–202 (TPMD…EVLH), 209–252 (GGRA…APEK), 256–296 (GHKK…KLGE), and 299–339 (TTAN…PSVS). The stretch at 380 to 403 (SFGFGSKLVIINTDSSGKSTVKVD) is one WD 8; interaction with SEC13 repeat. Over residues 457–480 (KESLFEDANNDEKEATSPETKKEN) the composition is skewed to basic and acidic residues. 3 disordered regions span residues 457–485 (KESLFEDANNDEKEATSPETKKENGEDDF), 765–784 (VKSSANAKIAKPASSSGQTR), and 793–1163 (PAYA…IPEN). Residues 794 to 810 (AYAPPVQAPPVQAPQPP) show a composition bias toward pro residues. Composition is skewed to low complexity over residues 811 to 824 (LVQQQQQQQQQQQP), 865 to 875 (TPSSLSGTTSG), 901 to 931 (AKTAAPRRAAAAATPPVSTPTPVSAPAFGSP), 939 to 951 (SQPGSVGSVSSAG), and 969 to 987 (SISRSTSRTTVPTSSTVPA). The segment covering 1004 to 1023 (SDASQPPSSGFASPTLNSSP) has biased composition (polar residues). 2 stretches are compositionally biased toward pro residues: residues 1062 to 1071 (YAPPKNPYAV) and 1083 to 1101 (APPPPAPKLGSAAPPPPQP).

Belongs to the WD repeat SEC31 family. As to quaternary structure, the COPII coat is composed of at least 5 proteins: the SEC23/24 complex, the SEC13/31 complex, and the protein SAR1. SEC13 and SEC31 make a 2:2 tetramer that forms the edge element of the COPII outer coat. The tetramer self-assembles in multiple copies to form the complete polyhedral cage. Interacts (via WD 8) with SEC13.

It is found in the cytoplasmic vesicle. Its subcellular location is the COPII-coated vesicle membrane. It localises to the endoplasmic reticulum membrane. Component of the coat protein complex II (COPII) which promotes the formation of transport vesicles from the endoplasmic reticulum (ER). The coat has two main functions, the physical deformation of the endoplasmic reticulum membrane into vesicles and the selection of cargo molecules. This Candida albicans (strain SC5314 / ATCC MYA-2876) (Yeast) protein is Protein transport protein SEC31 (PGA63).